Consider the following 64-residue polypeptide: Conotoxin VnMLCL-042 (64 aa).

Positions 1-19 (MLCLPVFIILLLLASPAAP) are cleaved as a signal peptide. Positions 20-43 (NPLQTRIQSNLIRAGPEDANMKTD) are excised as a propeptide. M63 is modified (methionine amide).

It belongs to the conotoxin T superfamily. As to expression, expressed by the venom duct.

The protein resides in the secreted. In Conus ventricosus (Mediterranean cone), this protein is Conotoxin VnMLCL-042.